Here is a 460-residue protein sequence, read N- to C-terminus: Argininosuccinate lyase (460 aa).

Belongs to the lyase 1 family. Argininosuccinate lyase subfamily.

The protein localises to the cytoplasm. It carries out the reaction 2-(N(omega)-L-arginino)succinate = fumarate + L-arginine. It functions in the pathway amino-acid biosynthesis; L-arginine biosynthesis; L-arginine from L-ornithine and carbamoyl phosphate: step 3/3. The polypeptide is Argininosuccinate lyase (Limosilactobacillus fermentum (strain NBRC 3956 / LMG 18251) (Lactobacillus fermentum)).